The primary structure comprises 216 residues: Adenylate kinase (216 aa).

Position 11 to 16 (11 to 16 (GSGKGT)) interacts with ATP. Residues 31–60 (ATGDLFRKAIECGDELGDTVKSYMERGELV) form an NMP region. AMP contacts are provided by residues threonine 32, arginine 37, 58–60 (ELV), 86–89 (GFPR), and glutamine 93. Residues 127-163 (GRWVCRSCQSPYQSGCAEVTKGKCSRCQGELYQRPDD) form an LID region. Position 128 (arginine 128) interacts with ATP. Zn(2+) is bound by residues cysteine 131, cysteine 134, cysteine 150, and cysteine 153. Residues arginine 160 and arginine 171 each coordinate AMP. Alanine 199 is a binding site for ATP.

It belongs to the adenylate kinase family. In terms of assembly, monomer.

The protein resides in the cytoplasm. It catalyses the reaction AMP + ATP = 2 ADP. It functions in the pathway purine metabolism; AMP biosynthesis via salvage pathway; AMP from ADP: step 1/1. Catalyzes the reversible transfer of the terminal phosphate group between ATP and AMP. Plays an important role in cellular energy homeostasis and in adenine nucleotide metabolism. The polypeptide is Adenylate kinase (Dehalococcoides mccartyi (strain ATCC BAA-2100 / JCM 16839 / KCTC 5957 / BAV1)).